A 435-amino-acid chain; its full sequence is Adenylosuccinate synthetase (435 aa).

GTP is bound by residues 22–28 (GDEGKGK) and 50–52 (GHT). The active-site Proton acceptor is Asp-23. Mg(2+)-binding residues include Asp-23 and Gly-50. IMP contacts are provided by residues 23 to 26 (DEGK), 48 to 51 (NAGH), Thr-140, Arg-154, Gln-235, Thr-250, and Arg-314. The active-site Proton donor is His-51. 310–316 (ATTGRKR) lines the substrate pocket. GTP-binding positions include Arg-316, 342-344 (KLD), and 424-426 (SVG).

The protein belongs to the adenylosuccinate synthetase family. As to quaternary structure, homodimer. Mg(2+) serves as cofactor.

It localises to the cytoplasm. The catalysed reaction is IMP + L-aspartate + GTP = N(6)-(1,2-dicarboxyethyl)-AMP + GDP + phosphate + 2 H(+). It participates in purine metabolism; AMP biosynthesis via de novo pathway; AMP from IMP: step 1/2. Functionally, plays an important role in the de novo pathway of purine nucleotide biosynthesis. Catalyzes the first committed step in the biosynthesis of AMP from IMP. This Chlorobaculum parvum (strain DSM 263 / NCIMB 8327) (Chlorobium vibrioforme subsp. thiosulfatophilum) protein is Adenylosuccinate synthetase.